Consider the following 800-residue polypeptide: General transcription and DNA repair factor IIH helicase/translocase subunit XPB (800 aa).

Residues 1-27 (MSSGDSNLKRRRGGNTGQSSKSYNTWT) are disordered. Residues 17–27 (GQSSKSYNTWT) are compositionally biased toward polar residues. Residues 329–491 (MFGNGRARSG…DLNFLIGPKL (163 aa)) form the Helicase ATP-binding domain. 342-349 (LPCGAGKS) contributes to the ATP binding site. The short motif at 444–447 (DEVH) is the DEVH box element. Residues 546–704 (RACEYLIRFH…ELPGIDQEVN (159 aa)) form the Helicase C-terminal domain. The disordered stretch occupies residues 743–769 (GAKKSKSSAPTVSRTTGGSTRALSGGN). The span at 749 to 764 (SSAPTVSRTTGGSTRA) shows a compositional bias: polar residues.

Belongs to the helicase family. RAD25/XPB subfamily. As to quaternary structure, component of the 7-subunit TFIIH core complex composed of XPB/repB, XPD/repD, gtf2h1, gtf2h2, gtf2h3, gtf2h4 and gtf2h5, which is active in NER. The core complex associates with the 3-subunit CDK-activating kinase (CAK) module composed of cycH/cyclin H, cdk7 and mnat1 to form the 10-subunit holoenzyme (holo-TFIIH) active in transcription.

It localises to the nucleus. It catalyses the reaction Couples ATP hydrolysis with the unwinding of duplex DNA by translocating in the 3'-5' direction.. The catalysed reaction is ATP + H2O = ADP + phosphate + H(+). In terms of biological role, ATP-dependent 3'-5' DNA helicase/translocase; binds dsDNA rather than ssDNA, unzipping it in a translocase rather than classical helicase activity. Component of the general transcription and DNA repair factor IIH (TFIIH) core complex. When complexed to CDK-activating kinase (CAK), involved in RNA transcription by RNA polymerase II. The ATPase activity of XPB/ERCC3, but not its helicase activity, is required for DNA opening; it may wrap around the damaged DNA wedging it open, causing localized melting and twisting that allows XPD/ERCC2 helicase to anchor. The ATP-dependent helicase activity of XPB/ERCC3 may be required for promoter escape. Also involved in transcription-coupled nucleotide excision repair (NER) of damaged DNA. In NER, TFIIH acts by opening DNA around the lesion to allow the excision of the damaged oligonucleotide and its replacement by a new DNA fragment. The structure of the TFIIH transcription complex differs from the NER-TFIIH complex. The protein is General transcription and DNA repair factor IIH helicase/translocase subunit XPB of Dictyostelium discoideum (Social amoeba).